The sequence spans 463 residues: Chromosomal replication initiator protein DnaA (463 aa).

The segment at Met1–Thr83 is domain I, interacts with DnaA modulators. Residues Thr83–Ser124 form a domain II region. The segment at Thr125–Ser343 is domain III, AAA+ region. Residues Gly171, Gly173, Lys174, and Thr175 each contribute to the ATP site. The tract at residues Asn344 to Asn463 is domain IV, binds dsDNA.

It belongs to the DnaA family. Oligomerizes as a right-handed, spiral filament on DNA at oriC.

The protein resides in the cytoplasm. In terms of biological role, plays an essential role in the initiation and regulation of chromosomal replication. ATP-DnaA binds to the origin of replication (oriC) to initiate formation of the DNA replication initiation complex once per cell cycle. Binds the DnaA box (a 9 base pair repeat at the origin) and separates the double-stranded (ds)DNA. Forms a right-handed helical filament on oriC DNA; dsDNA binds to the exterior of the filament while single-stranded (ss)DNA is stabiized in the filament's interior. The ATP-DnaA-oriC complex binds and stabilizes one strand of the AT-rich DNA unwinding element (DUE), permitting loading of DNA polymerase. After initiation quickly degrades to an ADP-DnaA complex that is not apt for DNA replication. Binds acidic phospholipids. This chain is Chromosomal replication initiator protein DnaA, found in Rickettsia africae (strain ESF-5).